A 394-amino-acid chain; its full sequence is 1-deoxy-D-xylulose 5-phosphate reductoisomerase (394 aa).

Residues T10, G11, S12, I13, G38, R39, N40, and N123 each contribute to the NADPH site. Residue K124 participates in 1-deoxy-D-xylulose 5-phosphate binding. An NADPH-binding site is contributed by E125. D149 serves as a coordination point for Mn(2+). 1-deoxy-D-xylulose 5-phosphate contacts are provided by S150, E151, S175, and H198. E151 serves as a coordination point for Mn(2+). An NADPH-binding site is contributed by G204. 1-deoxy-D-xylulose 5-phosphate-binding residues include S211, N216, K217, and E220. E220 is a binding site for Mn(2+).

The protein belongs to the DXR family. It depends on Mg(2+) as a cofactor. Mn(2+) is required as a cofactor.

It carries out the reaction 2-C-methyl-D-erythritol 4-phosphate + NADP(+) = 1-deoxy-D-xylulose 5-phosphate + NADPH + H(+). Its pathway is isoprenoid biosynthesis; isopentenyl diphosphate biosynthesis via DXP pathway; isopentenyl diphosphate from 1-deoxy-D-xylulose 5-phosphate: step 1/6. Functionally, catalyzes the NADPH-dependent rearrangement and reduction of 1-deoxy-D-xylulose-5-phosphate (DXP) to 2-C-methyl-D-erythritol 4-phosphate (MEP). This Cereibacter sphaeroides (strain ATCC 17029 / ATH 2.4.9) (Rhodobacter sphaeroides) protein is 1-deoxy-D-xylulose 5-phosphate reductoisomerase.